The chain runs to 101 residues: Small ribosomal subunit protein bS18c (101 aa).

This sequence belongs to the bacterial ribosomal protein bS18 family. Part of the 30S ribosomal subunit.

Its subcellular location is the plastid. The protein resides in the chloroplast. In Solanum bulbocastanum (Wild potato), this protein is Small ribosomal subunit protein bS18c.